The sequence spans 81 residues: Acyl carrier protein (81 aa).

In terms of domain architecture, Carrier spans Gln-3–Gln-78. Ser-38 carries the O-(pantetheine 4'-phosphoryl)serine modification.

Belongs to the acyl carrier protein (ACP) family. In terms of processing, 4'-phosphopantetheine is transferred from CoA to a specific serine of apo-ACP by AcpS. This modification is essential for activity because fatty acids are bound in thioester linkage to the sulfhydryl of the prosthetic group.

Its subcellular location is the cytoplasm. Its pathway is lipid metabolism; fatty acid biosynthesis. In terms of biological role, carrier of the growing fatty acid chain in fatty acid biosynthesis. The polypeptide is Acyl carrier protein (Crocosphaera subtropica (strain ATCC 51142 / BH68) (Cyanothece sp. (strain ATCC 51142))).